The primary structure comprises 3550 residues: Zinc finger homeobox protein 4 (3550 aa).

Residue methionine 1 is modified to N-acetylmethionine. 3 disordered regions span residues 1-54 (METC…LKTD), 426-479 (HLSS…AYSN), and 521-614 (TSSS…IECP). Over residues 9–20 (ISRQENGQSTSK) the composition is skewed to polar residues. Composition is skewed to basic and acidic residues over residues 39 to 54 (EPDR…LKTD) and 433 to 451 (KMSE…KEST). The span at 467 to 479 (EPGDEDEEDAYSN) shows a compositional bias: acidic residues. Composition is skewed to polar residues over residues 542 to 553 (GRSNGNVTNSYS) and 566 to 576 (RDGTTAAPSET). 3 consecutive C2H2-type zinc fingers follow at residues 611 to 634 (IECP…TMMH), 642 to 665 (LKCP…KEKH), and 697 to 721 (FRCE…SDKH). Positions 739–763 (HSAPTPNTSLSGCGTPSPSKPKQKP) are disordered. Over residues 742–752 (PTPNTSLSGCG) the composition is skewed to polar residues. 4 C2H2-type zinc fingers span residues 765 to 787 (RRCE…MTSE), 915 to 939 (YQCK…TDKH), 971 to 993 (LKCN…TTNH), and 1019 to 1043 (YYCA…SVKH). Residues 1100–1142 (KAASEEPSEDAGDPLKPPTVAEDDEKEAHKRDNSEGKISTKDP) form a disordered region. Residues 1125 to 1142 (KEAHKRDNSEGKISTKDP) show a composition bias toward basic and acidic residues. Lysine 1165 is covalently cross-linked (Glycyl lysine isopeptide (Lys-Gly) (interchain with G-Cter in SUMO2)). 2 consecutive C2H2-type zinc fingers follow at residues 1188-1211 (YQYP…LSQH) and 1217-1240 (ICCP…THLH). Residues 1271-1339 (APEKSEQDPP…EWNKTSSKDV (69 aa)) form a disordered region. Basic and acidic residues predominate over residues 1297-1326 (VDDKSMSGLEDSKVGVEIKNEEQKPAKEPV). Residue lysine 1315 forms a Glycyl lysine isopeptide (Lys-Gly) (interchain with G-Cter in SUMO2) linkage. C2H2-type zinc fingers lie at residues 1368–1390 (YRCN…SQYH) and 1396–1419 (TMCT…EAGH). The disordered stretch occupies residues 1467–1492 (EGKASPVESDGSSIPDDLGLEPKRTL). The C2H2-type 12 zinc finger occupies 1512 to 1538 (YKCTVCKESFTQKNILLVHYNSVSHLH). Lysine 1562 is covalently cross-linked (Glycyl lysine isopeptide (Lys-Gly) (interchain with G-Cter in SUMO2)). The segment at 1564–1588 (YKCSTCSVAYSQSSTLEIHMRSVLH) adopts a C2H2-type 13 zinc-finger fold. Positions 1779–1873 (PQLQPQNQQP…CIPPPRIASG (95 aa)) are disordered. Positions 1792-1808 (QQQQPQQQPSKLLKQEQ) are enriched in low complexity. A Glycyl lysine isopeptide (Lys-Gly) (interchain with G-Cter in SUMO2) cross-link involves residue lysine 1805. The segment covering 1823–1860 (PSYKEAEEVTEKQEKPKQEFINDTEGLKDSKDIKKQKS) has biased composition (basic and acidic residues). Residues 1916–1939 (LECGICGKLFSNVLILKSHQEHVH) form a C2H2-type 14 zinc finger. A disordered region spans residues 1984–2006 (KIPNTVSAPLQAPPPTPPSAPQQ). Residues 1994–2003 (QAPPPTPPSA) show a composition bias toward pro residues. 2 consecutive DNA-binding regions (homeobox) follow at residues 2069-2128 (FKRP…RQRN) and 2166-2225 (KRSS…RKSY). The C2H2-type 15; degenerate zinc-finger motif lies at 2252–2276 (YQCKKCNVVFPRIFDLITHQKKQCY). Residues 2318–2331 (TLVASSGSGTSTPL) show a composition bias toward polar residues. The segment at 2318-2412 (TLVASSGSGT…SQTPIPSSPL (95 aa)) is disordered. Residues 2337–2355 (PEPEKNSPKTEYPGEKTKQ) show a composition bias toward basic and acidic residues. Positions 2356–2376 (SDPSLPQGTKSAPSSVLTSSE) are enriched in polar residues. The segment covering 2383–2392 (PQPPTQPPKQ) has biased composition (pro residues). Residues 2401-2412 (SASQTPIPSSPL) show a composition bias toward polar residues. The C2H2-type 16 zinc-finger motif lies at 2430-2452 (YPCDQCTLAFPTLELWKEHQHMH). The segment covering 2490–2508 (GSSLTQMPPQTSTAHTTAP) has biased composition (polar residues). Residues 2490 to 2545 (GSSLTQMPPQTSTAHTTAPASVAASLKRKLEDKEDNNCSEKEGGNSGEDQHRDKRL) are disordered. Over residues 2517-2541 (RKLEDKEDNNCSEKEGGNSGEDQHR) the composition is skewed to basic and acidic residues. The segment at residues 2542-2601 (DKRLRTTITPEQLEILYEKYLLDSNPTRKMLDHIAREVGLKKRVVQVWFQNTRARERKGQ) is a DNA-binding region (homeobox 3). The segment at 2612–2635 (KRCPFCRALFKAKSALESHIRSRH) adopts a C2H2-type 17 zinc-finger fold. At serine 2645 the chain carries Phosphoserine. Disordered regions lie at residues 2746-2791 (AISD…ATTP) and 2810-2866 (HFND…PGHK). A compositionally biased stretch (polar residues) spans 2781-2791 (LDSLQKPATTP). The span at 2811-2820 (FNDKDGDHDQ) shows a compositional bias: basic and acidic residues. Residues 2843 to 2855 (PSSPNPFGSSNPF) show a composition bias toward low complexity. Positions 2865–2924 (HKRFRTQMSNLQLKVLKACFSDYRTPTMQECEMLGNEIGLPKRVVQVWFQNARAKERKFK) form a DNA-binding region, homeobox 4. Residues 2943–2967 (PECTLCGVKYSARLSIRDHIFSKQH) form a C2H2-type 18 zinc finger. Disordered regions lie at residues 3051–3156 (PSSL…EEKI) and 3261–3318 (QDSL…VQLD). The segment covering 3058 to 3068 (PQNSNTLTSPG) has biased composition (polar residues). The span at 3075 to 3088 (PSSATSSPALSLSS) shows a compositional bias: low complexity. Residues 3097 to 3109 (TPPPPPPPPPPPS) are compositionally biased toward pro residues. Residues 3136 to 3156 (IKEEESEAIKPEKHPKKEEKI) show a composition bias toward basic and acidic residues. Residue lysine 3137 forms a Glycyl lysine isopeptide (Lys-Gly) (interchain with G-Cter in SUMO2) linkage. Residues 3248–3277 (ALLQQYQQYQQSLQDSLQKQQKQQQEQQQK) are a coiled coil. The span at 3261–3276 (QDSLQKQQKQQQEQQQ) shows a compositional bias: low complexity. The span at 3298–3318 (SETKEEKSTAPESTKEEVQLD) shows a compositional bias: basic and acidic residues. A C2H2-type 19; degenerate zinc finger spans residues 3337 to 3361 (FVCRKCQMMFTDEDATVNHQKSFCY). The C2H2-type 20 zinc finger occupies 3381-3405 (YQCLACDLALSGNEALSQHLQSSLH). The disordered stretch occupies residues 3424 to 3445 (LPHSVCSPPPNTSSTSPSAASS). Residues 3435 to 3445 (TSSTSPSAASS) are compositionally biased toward low complexity.

It belongs to the krueppel C2H2-type zinc-finger protein family. As to expression, expressed in brain, heart, lung, muscle and small intestine. No expression detected in undifferentiated P19 cells, however, expression was seen following retinoic acid treatment to induce neuronal differentiation. Expressed in undifferentiated C2C12 cells, following induction of muscle differentiation in a low-serum medium, expression levels were decreased.

It localises to the nucleus. Its function is as follows. May play a role in neural and muscle differentiation. May be involved in transcriptional regulation. The sequence is that of Zinc finger homeobox protein 4 (Zfhx4) from Mus musculus (Mouse).